We begin with the raw amino-acid sequence, 303 residues long: Lysosomal amino acid transporter 1 homolog (303 aa).

The Lumenal segment spans residues 1 to 38 (MAEGLRAPPPPGNGSECPDGARWVLRLLGECARDGRDV). An N-linked (GlcNAc...) asparagine glycan is attached at Asn13. The region spanning 36 to 102 (RDVGSALLGL…LANQLPLQVY (67 aa)) is the PQ-loop 1 domain. The helical transmembrane segment at 39 to 59 (GSALLGLLSIGCFAAAALPQF) threads the bilayer. Residues 60–73 (YQACKTGIMDRALS) are Cytoplasmic-facing. The chain crosses the membrane as a helical span at residues 74–94 (IYFLLGWLGGDLLNLIGSFLA). Over 95-96 (NQ) the chain is Lumenal. The helical transmembrane segment at 97–117 (LPLQVYTAVYYVLADLVMLSL) threads the bilayer. Residues 118 to 131 (YGYYKAKNWGTGAT) are Cytoplasmic-facing. A helical membrane pass occupies residues 132–152 (ASINAACLFCLLGTATTLTVL). Residues 153 to 182 (SHDTGPAPNPAAFGGRSLLSLGLEGPGPEP) are Lumenal-facing. The helical transmembrane segment at 183-203 (ISKTEIIGFAIGSISSVLYLC) threads the bilayer. A PQ-loop 2 domain is found at 186–251 (TEIIGFAIGS…LKNPEPGQSE (66 aa)). Residues 204–220 (SRLPQIYTNYRRKSTAG) are Cytoplasmic-facing. The chain crosses the membrane as a helical span at residues 221-241 (VSFLLFALVMLGNLLYGTSVL). The Lumenal portion of the chain corresponds to 242–260 (LKNPEPGQSEGDYILHHLP). Residues 261 to 281 (WLIGSLGVLSLDVIISFQFLA) form a helical membrane-spanning segment. At 282-303 (YRTGQPSAGEEREALLAEHGDS) the chain is on the cytoplasmic side. A Di-leucine motif motif is present at residues 296 to 297 (LL).

Belongs to the laat-1 family.

The protein localises to the lysosome membrane. Amino acid transporter that specifically mediates the pH-dependent export of the cationic amino acids arginine, histidine and lysine from lysosomes. The chain is Lysosomal amino acid transporter 1 homolog (SLC66A1) from Gallus gallus (Chicken).